The sequence spans 631 residues: Integrator complex subunit 10 (631 aa).

Residues 545–570 (FELTSSPNSSGTPTATTVAGGSQSRR) show a composition bias toward polar residues. The interval 545 to 577 (FELTSSPNSSGTPTATTVAGGSQSRRIGTRGAD) is disordered.

It belongs to the Integrator subunit 10 family. In terms of assembly, belongs to the multiprotein complex Integrator, at least composed of IntS1, IntS2, IntS3, IntS4, omd/IntS5, IntS6, defl/IntS7, IntS8, IntS9, IntS10, IntS11, IntS12, asun/IntS13, IntS14 and IntS15. The core complex associates with protein phosphatase 2A subunits mts/PP2A and Pp2A-29B, to form the Integrator-PP2A (INTAC) complex.

Its subcellular location is the nucleus. Its function is as follows. Component of the integrator complex, a multiprotein complex that terminates RNA polymerase II (Pol II) transcription in the promoter-proximal region of genes. The integrator complex provides a quality checkpoint during transcription elongation by driving premature transcription termination of transcripts that are unfavorably configured for transcriptional elongation: the complex terminates transcription by (1) catalyzing dephosphorylation of the C-terminal domain (CTD) of Pol II subunit Polr2A/Rbp1 and Spt5, and (2) degrading the exiting nascent RNA transcript via endonuclease activity. The integrator complex is also involved in the 3'-end processing of the U7 snRNA, and also the spliceosomal snRNAs U1, U2, U4 and U5. The protein is Integrator complex subunit 10 of Drosophila melanogaster (Fruit fly).